We begin with the raw amino-acid sequence, 1305 residues long: Contactin-associated protein like 5-3 (1305 aa).

The signal sequence occupies residues Met-1–Thr-24. The F5/8 type C domain maps to Ala-25–Cys-174. Residues Ala-25–Asp-1235 lie on the Extracellular side of the membrane. Laminin G-like domains lie at Val-180–Cys-360 and Pro-367–Cys-544. Asn-282 carries N-linked (GlcNAc...) asparagine glycosylation. A disulfide bridge links Cys-329 with Cys-360. Asn-496 carries an N-linked (GlcNAc...) asparagine glycan. Cystine bridges form between Cys-512–Cys-544, Cys-550–Cys-561, and Cys-555–Cys-570. An EGF-like 1 domain is found at Ile-546–His-583. Asn-571 carries an N-linked (GlcNAc...) asparagine glycan. Cys-572 and Cys-582 are disulfide-bonded. Positions Asp-584–Trp-790 constitute a Fibrinogen C-terminal domain. Positions Asn-791–Cys-956 constitute a Laminin G-like 3 domain. 4 disulfide bridges follow: Cys-929-Cys-956, Cys-960-Cys-973, Cys-967-Cys-982, and Cys-984-Cys-994. The EGF-like 2 domain occupies Pro-957–Gln-995. Residues Gln-1013–Cys-1198 form the Laminin G-like 4 domain. N-linked (GlcNAc...) asparagine glycans are attached at residues Asn-1023 and Asn-1057. Cys-1163 and Cys-1198 are oxidised to a cystine. A helical membrane pass occupies residues Leu-1236–Ile-1256. At Met-1257–Ile-1305 the chain is on the cytoplasmic side.

This sequence belongs to the neurexin family. As to expression, expressed in brain.

It localises to the membrane. Functionally, may play a role in the correct development and proper functioning of the peripheral and central nervous system and be involved in cell adhesion and intercellular communication. This chain is Contactin-associated protein like 5-3 (Cntnap5c), found in Mus musculus (Mouse).